The primary structure comprises 299 residues: Bifunctional protein FolD (299 aa).

NADP(+)-binding positions include 169–171 (GRS), serine 194, and isoleucine 235.

The protein belongs to the tetrahydrofolate dehydrogenase/cyclohydrolase family. Homodimer.

It carries out the reaction (6R)-5,10-methylene-5,6,7,8-tetrahydrofolate + NADP(+) = (6R)-5,10-methenyltetrahydrofolate + NADPH. It catalyses the reaction (6R)-5,10-methenyltetrahydrofolate + H2O = (6R)-10-formyltetrahydrofolate + H(+). Its pathway is one-carbon metabolism; tetrahydrofolate interconversion. Functionally, catalyzes the oxidation of 5,10-methylenetetrahydrofolate to 5,10-methenyltetrahydrofolate and then the hydrolysis of 5,10-methenyltetrahydrofolate to 10-formyltetrahydrofolate. This chain is Bifunctional protein FolD, found in Nostoc sp. (strain PCC 7120 / SAG 25.82 / UTEX 2576).